The following is a 99-amino-acid chain: Aspartyl/glutamyl-tRNA(Asn/Gln) amidotransferase subunit C (99 aa).

This sequence belongs to the GatC family. Heterotrimer of A, B and C subunits.

It carries out the reaction L-glutamyl-tRNA(Gln) + L-glutamine + ATP + H2O = L-glutaminyl-tRNA(Gln) + L-glutamate + ADP + phosphate + H(+). The enzyme catalyses L-aspartyl-tRNA(Asn) + L-glutamine + ATP + H2O = L-asparaginyl-tRNA(Asn) + L-glutamate + ADP + phosphate + 2 H(+). Functionally, allows the formation of correctly charged Asn-tRNA(Asn) or Gln-tRNA(Gln) through the transamidation of misacylated Asp-tRNA(Asn) or Glu-tRNA(Gln) in organisms which lack either or both of asparaginyl-tRNA or glutaminyl-tRNA synthetases. The reaction takes place in the presence of glutamine and ATP through an activated phospho-Asp-tRNA(Asn) or phospho-Glu-tRNA(Gln). The chain is Aspartyl/glutamyl-tRNA(Asn/Gln) amidotransferase subunit C from Polaromonas naphthalenivorans (strain CJ2).